Consider the following 91-residue polypeptide: Small ribosomal subunit protein bS16 (91 aa).

Belongs to the bacterial ribosomal protein bS16 family.

The protein is Small ribosomal subunit protein bS16 of Levilactobacillus brevis (strain ATCC 367 / BCRC 12310 / CIP 105137 / JCM 1170 / LMG 11437 / NCIMB 947 / NCTC 947) (Lactobacillus brevis).